We begin with the raw amino-acid sequence, 274 residues long: Elongation factor Ts (274 aa).

Residues 82 to 85 are involved in Mg(2+) ion dislocation from EF-Tu; that stretch reads TDFV.

It belongs to the EF-Ts family.

It localises to the cytoplasm. In terms of biological role, associates with the EF-Tu.GDP complex and induces the exchange of GDP to GTP. It remains bound to the aminoacyl-tRNA.EF-Tu.GTP complex up to the GTP hydrolysis stage on the ribosome. This chain is Elongation factor Ts, found in Flavobacterium psychrophilum (strain ATCC 49511 / DSM 21280 / CIP 103535 / JIP02/86).